The following is a 317-amino-acid chain: tRNA dimethylallyltransferase (317 aa).

14-21 (GPTASGKS) serves as a coordination point for ATP. Substrate is bound at residue 16 to 21 (TASGKS). 2 interaction with substrate tRNA regions span residues 39–42 (DSVL) and 163–167 (QRIQR).

Belongs to the IPP transferase family. Monomer. Mg(2+) is required as a cofactor.

The catalysed reaction is adenosine(37) in tRNA + dimethylallyl diphosphate = N(6)-dimethylallyladenosine(37) in tRNA + diphosphate. Its function is as follows. Catalyzes the transfer of a dimethylallyl group onto the adenine at position 37 in tRNAs that read codons beginning with uridine, leading to the formation of N6-(dimethylallyl)adenosine (i(6)A). The chain is tRNA dimethylallyltransferase from Xylella fastidiosa (strain M12).